The chain runs to 235 residues: Futalosine hydrolase (235 aa).

The protein belongs to the PNP/UDP phosphorylase family. Futalosine hydrolase subfamily.

It catalyses the reaction futalosine + H2O = dehypoxanthine futalosine + hypoxanthine. It functions in the pathway quinol/quinone metabolism; menaquinone biosynthesis. Its function is as follows. Catalyzes the hydrolysis of futalosine (FL) to dehypoxanthine futalosine (DHFL) and hypoxanthine, a step in the biosynthesis of menaquinone (MK, vitamin K2). Does not accept aminodeoxyfutalosine (AFL) as a substrate. The polypeptide is Futalosine hydrolase (Streptomyces coelicolor (strain ATCC BAA-471 / A3(2) / M145)).